The sequence spans 649 residues: Transcription factor E2-alpha (649 aa).

4 disordered regions span residues 37–107 (RPAS…SERN), 132–207 (GLSS…AKTP), 296–325 (TYSGTSGHTPPVSGADSLLGTRGTTASSSG), and 339–376 (DHSSNNFSPSPSTPVGSPQGLPGTSQWPRAGAPSALSP). Over residues 57 to 71 (SESWGNSEQNSSSFD) the composition is skewed to polar residues. A compositionally biased stretch (low complexity) spans 132–148 (GLSSPGPLSPSGVKSSS). 2 positions are modified to phosphoserine: S135 and S140. The Nuclear localization signal signature appears at 171-177 (PKKVRKV). The span at 339-352 (DHSSNNFSPSPSTP) shows a compositional bias: low complexity. T351 carries the post-translational modification Phosphothreonine. At S355 the chain carries Phosphoserine. R367 bears the Omega-N-methylarginine mark. S375 carries the post-translational modification Phosphoserine. A leucine-zipper region spans residues 385 to 420 (LSKMEDRLDEAIHVLRSHAVGTASELHGLLPGHSTL). The segment at 435 to 547 (AGLVSGSHPE…KAEREKERRV (113 aa)) is disordered. Low complexity predominate over residues 459–477 (SLPSQPSSLPDLSQRPPDS). Residue K494 forms a Glycyl lysine isopeptide (Lys-Gly) (interchain with G-Cter in SUMO2) linkage. S524 is modified (phosphoserine). Phosphothreonine is present on D526. Positions 537-547 (QKAEREKERRV) are enriched in basic and acidic residues. The bHLH domain occupies 544–597 (ERRVANNARERLRVRDINEAFKELGRMCQLHLSTEKPQTKLLILHQAVAVILSL). Residue K620 forms a Glycyl lysine isopeptide (Lys-Gly) (interchain with G-Cter in SUMO2) linkage.

In terms of assembly, homodimer. Heterodimer; efficient DNA binding requires dimerization with another bHLH protein. Forms a heterodimer with TWIST1 and TWIST2. Forms a heterodimer with NEUROD1; the heterodimer is inhibited in presence of ID2, but not NR0B2, to E-box element. Forms a heterodimer with TCF15; the heterodimer binds E-box element. Forms a heterodimer with MYOG; heterodimerization enhances MYOG DNA-binding and transcriptional activities. Forms a heterodimer with ATOH8; repress transcription of TCF3 and TCF3-NEUROG3 dimer-induced transactivation of E box-dependent promoters. Component of a nuclear TAL-1 complex composed at least of CBFA2T3, LDB1, TAL1 and TCF3. Interacts with NEUROD2. Interacts with EP300. Interacts with PTF1A, TGFB1I1. Interacts with UBE2I. Interacts with BHLHA9. Interacts with ASB2; the interaction is mediated by SKP2 and targets TCF3 for Notch-induced proteasomal degradation. Interacts with transcription factor ASCL5/AmeloD. Interacts with RALGAPA1. Interacts with FIGLA. As to quaternary structure, forms a heterodimer with ATOH7; required for ATOH7 DNA-binding. Phosphorylated following NGF stimulation. Post-translationally, undergoes Notch-induced ubiquitination and subsequent proteasomal degradation which is mediated by ASB1 or ASB2, the substrate-recognition components of probable ECS E3 ubiquitin-protein ligase complexes.

The protein localises to the nucleus. Transcriptional regulator involved in the initiation of neuronal differentiation and mesenchymal to epithelial transition. Heterodimers between TCF3 and tissue-specific basic helix-loop-helix (bHLH) proteins play major roles in determining tissue-specific cell fate during embryogenesis, like muscle or early B-cell differentiation. Together with TCF15, required for the mesenchymal to epithelial transition. Dimers bind DNA on E-box motifs: 5'-CANNTG-3'. Binds to the kappa-E2 site in the kappa immunoglobulin gene enhancer. Binds to the consensus sequence CAC/GCTGT/C present, in the chymotrypsin, insulin, AP-4, and several other gene enhancer motifs. In terms of biological role, facilitates ATOH7 binding to DNA at the consensus sequence 5'-CAGGTG-3', and positively regulates transcriptional activity. The sequence is that of Transcription factor E2-alpha (Tcf3) from Rattus norvegicus (Rat).